The sequence spans 112 residues: Peptidyl-prolyl cis-trans isomerase (112 aa).

The tract at residues 1-22 is disordered; that stretch reads MGVEKQVISSGNGQDFPKPGDR. In terms of domain architecture, PPIase FKBP-type spans 20 to 108; sequence GDRITMHYTG…LFDVELLAIN (89 aa).

Belongs to the FKBP-type PPIase family. FKBP1 subfamily.

The protein localises to the cytoplasm. It localises to the nucleus. The enzyme catalyses [protein]-peptidylproline (omega=180) = [protein]-peptidylproline (omega=0). Its function is as follows. PPIases accelerate the folding of proteins. It catalyzes the cis-trans isomerization of proline imidic peptide bonds in oligopeptides. Has an important role in sexual development and serves as the target for rapamycin action. The protein is Peptidyl-prolyl cis-trans isomerase (fkh1) of Schizosaccharomyces pombe (strain 972 / ATCC 24843) (Fission yeast).